The chain runs to 120 residues: Large ribosomal subunit protein uL18 (120 aa).

Residues 1–10 show a composition bias toward basic and acidic residues; it reads MSTPRKEQTQ. A disordered region spans residues 1–25; it reads MSTPRKEQTQKRHRRLRRHLEGTPE.

It belongs to the universal ribosomal protein uL18 family. As to quaternary structure, part of the 50S ribosomal subunit; part of the 5S rRNA/L5/L18/L25 subcomplex. Contacts the 5S and 23S rRNAs.

This is one of the proteins that bind and probably mediate the attachment of the 5S RNA into the large ribosomal subunit, where it forms part of the central protuberance. The protein is Large ribosomal subunit protein uL18 of Synechococcus sp. (strain RCC307).